The sequence spans 173 residues: MAKKDPLEELLEFVRSVAGEDGVRVFKELMRYEDISEEQLTETLGMKPNDVRRALYKLERYGLVRNYKIRNENDGTYIYYWYVDRETLNRNLLKIKKSVLEKLKRRLESEEDQYFYCPACGLQFSYEEAMGYDFTCPRCGEPLELAESNPRKKLLEKIVKRLEEEIKHEESVL.

The HTH TFE/IIEalpha-type domain occupies 6 to 89; the sequence is PLEELLEFVR…YWYVDRETLN (84 aa).

Belongs to the TFE family. As to quaternary structure, monomer. Interaction with RNA polymerase subunits RpoF and RpoE is necessary for Tfe stimulatory transcription activity. Able to interact with Tbp and RNA polymerase in the absence of DNA promoter. Interacts both with the preinitiation and elongation complexes.

Functionally, transcription factor that plays a role in the activation of archaeal genes transcribed by RNA polymerase. Facilitates transcription initiation by enhancing TATA-box recognition by TATA-box-binding protein (Tbp), and transcription factor B (Tfb) and RNA polymerase recruitment. Not absolutely required for transcription in vitro, but particularly important in cases where Tbp or Tfb function is not optimal. It dynamically alters the nucleic acid-binding properties of RNA polymerases by stabilizing the initiation complex and destabilizing elongation complexes. Seems to translocate with the RNA polymerase following initiation and acts by binding to the non template strand of the transcription bubble in elongation complexes. The chain is Transcription factor E from Ignicoccus hospitalis (strain KIN4/I / DSM 18386 / JCM 14125).